A 461-amino-acid chain; its full sequence is Photosystem II CP43 reaction center protein (461 aa).

The propeptide occupies 1-2 (ME). Threonine 3 carries the post-translational modification N-acetylthreonine. A Phosphothreonine modification is found at threonine 3. A run of 5 helical transmembrane segments spans residues 57 to 81 (LFEVAHFVPEKPMYEQGLILLPHLA), 122 to 143 (LIGPETLEETFPFFGYVWKDKN), 166 to 188 (KALYFGGVYDTWAPGGGDVRIIT), 243 to 263 (QPWAWTRRAFVWSGEAYLSYS), and 279 to 300 (WFNNTAYPSEFYGPTGPEASQS). Glutamate 355 contributes to the [CaMn4O5] cluster binding site. Residues 435-459 (RARAAAAGFEKGIDRFNEPTLSLRP) form a helical membrane-spanning segment.

The protein belongs to the PsbB/PsbC family. PsbC subfamily. In terms of assembly, PSII is composed of 1 copy each of membrane proteins PsbA, PsbB, PsbC, PsbD, PsbE, PsbF, PsbH, PsbI, PsbJ, PsbK, PsbL, PsbM, PsbT, PsbX, PsbY, PsbZ, Psb30/Ycf12, at least 3 peripheral proteins of the oxygen-evolving complex and a large number of cofactors. It forms dimeric complexes. It depends on Binds multiple chlorophylls and provides some of the ligands for the Ca-4Mn-5O cluster of the oxygen-evolving complex. It may also provide a ligand for a Cl- that is required for oxygen evolution. PSII binds additional chlorophylls, carotenoids and specific lipids. as a cofactor.

Its subcellular location is the plastid. The protein resides in the chloroplast thylakoid membrane. Functionally, one of the components of the core complex of photosystem II (PSII). It binds chlorophyll and helps catalyze the primary light-induced photochemical processes of PSII. PSII is a light-driven water:plastoquinone oxidoreductase, using light energy to abstract electrons from H(2)O, generating O(2) and a proton gradient subsequently used for ATP formation. The polypeptide is Photosystem II CP43 reaction center protein (Oedogonium cardiacum (Filamentous green alga)).